The following is a 94-amino-acid chain: Pyrimidine/purine nucleoside phosphorylase (94 aa).

The protein belongs to the nucleoside phosphorylase PpnP family.

The enzyme catalyses a purine D-ribonucleoside + phosphate = a purine nucleobase + alpha-D-ribose 1-phosphate. It catalyses the reaction adenosine + phosphate = alpha-D-ribose 1-phosphate + adenine. It carries out the reaction cytidine + phosphate = cytosine + alpha-D-ribose 1-phosphate. The catalysed reaction is guanosine + phosphate = alpha-D-ribose 1-phosphate + guanine. The enzyme catalyses inosine + phosphate = alpha-D-ribose 1-phosphate + hypoxanthine. It catalyses the reaction thymidine + phosphate = 2-deoxy-alpha-D-ribose 1-phosphate + thymine. It carries out the reaction uridine + phosphate = alpha-D-ribose 1-phosphate + uracil. The catalysed reaction is xanthosine + phosphate = alpha-D-ribose 1-phosphate + xanthine. Catalyzes the phosphorolysis of diverse nucleosides, yielding D-ribose 1-phosphate and the respective free bases. Can use uridine, adenosine, guanosine, cytidine, thymidine, inosine and xanthosine as substrates. Also catalyzes the reverse reactions. This Pseudomonas entomophila (strain L48) protein is Pyrimidine/purine nucleoside phosphorylase.